A 138-amino-acid chain; its full sequence is Holo-[acyl-carrier-protein] synthase (138 aa).

The Mg(2+) site is built by aspartate 8 and glutamate 60.

This sequence belongs to the P-Pant transferase superfamily. AcpS family. Requires Mg(2+) as cofactor.

Its subcellular location is the cytoplasm. The catalysed reaction is apo-[ACP] + CoA = holo-[ACP] + adenosine 3',5'-bisphosphate + H(+). In terms of biological role, transfers the 4'-phosphopantetheine moiety from coenzyme A to a Ser of acyl-carrier-protein. The sequence is that of Holo-[acyl-carrier-protein] synthase from Magnetococcus marinus (strain ATCC BAA-1437 / JCM 17883 / MC-1).